The sequence spans 245 residues: NAD-dependent protein deacylase (245 aa).

One can recognise a Deacetylase sirtuin-type domain in the interval 1-245 (MEAVWESARI…RLSRAMGIDI (245 aa)). Position 22-41 (22-41 (GAGISAESGIPTFRGKDGLW)) interacts with NAD(+). Substrate contacts are provided by Tyr-66 and Arg-69. NAD(+) is bound at residue 100 to 103 (QNVD). His-118 functions as the Proton acceptor in the catalytic mechanism. 4 residues coordinate Zn(2+): Cys-126, Cys-129, Cys-146, and Cys-149. NAD(+) contacts are provided by residues 186 to 188 (GTS), 212 to 214 (NPE), and Met-241.

This sequence belongs to the sirtuin family. Class III subfamily. Zn(2+) is required as a cofactor.

The protein localises to the cytoplasm. It carries out the reaction N(6)-acetyl-L-lysyl-[protein] + NAD(+) + H2O = 2''-O-acetyl-ADP-D-ribose + nicotinamide + L-lysyl-[protein]. The catalysed reaction is N(6)-succinyl-L-lysyl-[protein] + NAD(+) + H2O = 2''-O-succinyl-ADP-D-ribose + nicotinamide + L-lysyl-[protein]. Functionally, NAD-dependent lysine deacetylase and desuccinylase that specifically removes acetyl and succinyl groups on target proteins. Modulates the activities of several proteins which are inactive in their acylated form. Deacetylates the N-terminal lysine residue of Alba, the major archaeal chromatin protein and that, in turn, increases Alba's DNA binding affinity, thereby repressing transcription. The protein is NAD-dependent protein deacylase of Aeropyrum pernix (strain ATCC 700893 / DSM 11879 / JCM 9820 / NBRC 100138 / K1).